A 201-amino-acid polypeptide reads, in one-letter code: Large ribosomal subunit protein bL25 (201 aa).

A disordered region spans residues 179–201 (VSITAPRVEAEKTEEEEPESTEE). Over residues 190–201 (KTEEEEPESTEE) the composition is skewed to acidic residues.

The protein belongs to the bacterial ribosomal protein bL25 family. CTC subfamily. Part of the 50S ribosomal subunit; part of the 5S rRNA/L5/L18/L25 subcomplex. Contacts the 5S rRNA. Binds to the 5S rRNA independently of L5 and L18.

In terms of biological role, this is one of the proteins that binds to the 5S RNA in the ribosome where it forms part of the central protuberance. This Prosthecochloris aestuarii (strain DSM 271 / SK 413) protein is Large ribosomal subunit protein bL25.